We begin with the raw amino-acid sequence, 217 residues long: Uracil-DNA glycosylase (217 aa).

The Proton acceptor role is filled by Asp-62.

Belongs to the uracil-DNA glycosylase (UDG) superfamily. UNG family.

It localises to the cytoplasm. It carries out the reaction Hydrolyzes single-stranded DNA or mismatched double-stranded DNA and polynucleotides, releasing free uracil.. In terms of biological role, excises uracil residues from the DNA which can arise as a result of misincorporation of dUMP residues by DNA polymerase or due to deamination of cytosine. This Streptococcus pyogenes serotype M18 (strain MGAS8232) protein is Uracil-DNA glycosylase.